We begin with the raw amino-acid sequence, 113 residues long: Protein ZEO1 (113 aa).

Polar residues predominate over residues methionine 1 to glutamine 16. The segment at methionine 1–lysine 96 is disordered. An N-acetylserine modification is found at serine 2. Serine 2 bears the Phosphoserine mark. Residues serine 2–glutamate 97 adopt a coiled-coil conformation. Residues glutamine 17–alanine 37 are compositionally biased toward basic and acidic residues. Residues lysine 18 and lysine 23 each participate in a glycyl lysine isopeptide (Lys-Gly) (interchain with G-Cter in ubiquitin) cross-link. Serine 25 bears the Phosphoserine mark. Glycyl lysine isopeptide (Lys-Gly) (interchain with G-Cter in ubiquitin) cross-links involve residues lysine 29 and lysine 34. Serine 40 carries the phosphoserine modification. Lysine 45 participates in a covalent cross-link: Glycyl lysine isopeptide (Lys-Gly) (interchain with G-Cter in ubiquitin). A Phosphothreonine modification is found at threonine 49. The segment covering glutamate 53–lysine 82 has biased composition (basic and acidic residues). Residues lysine 57 and lysine 82 each participate in a glycyl lysine isopeptide (Lys-Gly) (interchain with G-Cter in ubiquitin) cross-link.

In terms of assembly, interacts with MID2. In terms of processing, phosphorylation of Ser-25 is induced 2-fold in response to mating pheromone.

Its subcellular location is the cell membrane. Functionally, acts antagonistically to MID2 in signaling cell wall stress to the PKC1-MPK1 cell integrity pathway. The sequence is that of Protein ZEO1 (ZEO1) from Saccharomyces cerevisiae (strain ATCC 204508 / S288c) (Baker's yeast).